A 456-amino-acid polypeptide reads, in one-letter code: Smoothelin-like protein 2 (456 aa).

Positions 24–88 form a coiled coil; that stretch reads LEGAVRALHE…RQVEALGLAT (65 aa). Phosphothreonine is present on Thr-96. 3 positions are modified to phosphoserine: Ser-98, Ser-126, and Ser-131. Positions 120–129 are enriched in polar residues; sequence HATFSLSGRS. Disordered regions lie at residues 120–140, 154–190, and 220–310; these read HATF…ASDL, GHQL…RMPH, and VGGF…GAQA. Residues 131–140 show a composition bias toward basic and acidic residues; sequence SVEHDEASDL. The span at 163 to 174 shows a compositional bias: polar residues; sequence NGSSEVQTSSAQ. Over residues 242–251 the composition is skewed to low complexity; sequence SSSFTRSLSG. 3 positions are modified to phosphoserine: Ser-250, Ser-252, and Ser-265. Pro residues predominate over residues 268–279; sequence LVTPPQSPPSSQ. Thr-270 is subject to Phosphothreonine. A Phosphoserine modification is found at Ser-274. Over residues 298 to 308 the composition is skewed to polar residues; the sequence is RSQTLPRTSGA. Ser-339 carries the post-translational modification Phosphoserine. One can recognise a Calponin-homology (CH) domain in the interval 346-453; the sequence is SSIKQILLEW…YVQSLYNHLR (108 aa).

It belongs to the smoothelin family.

This is Smoothelin-like protein 2 (Smtnl2) from Mus musculus (Mouse).